The chain runs to 1032 residues: Contactin-1a (1032 aa).

The first 31 residues, 1-31 (MIPEAFQPRAMKHTTTVLMLALSSRFWSVCA), serve as a signal peptide directing secretion. Ig-like C2-type domains follow at residues 46–139 (PVFE…ARVQ), 144–231 (DMFS…KSVF), 249–335 (PADI…THLY), 340–417 (PDWL…AELR), 423–510 (PSFQ…GSLS), and 515–612 (TKIT…AELV). 2 cysteine pairs are disulfide-bonded: Cys70/Cys122 and Cys166/Cys219. N-linked (GlcNAc...) asparagine glycans are attached at residues Asn119, Asn216, and Asn266. 3 cysteine pairs are disulfide-bonded: Cys271–Cys319, Cys361–Cys401, and Cys446–Cys494. N-linked (GlcNAc...) asparagine glycosylation is found at Asn455, Asn467, Asn483, and Asn504. Cys536 and Cys596 form a disulfide bridge. N-linked (GlcNAc...) asparagine glycosylation is present at Asn604. 4 consecutive Fibronectin type-III domains span residues 619–718 (PPGG…TREA), 723–820 (APSD…SAQD), 825–918 (APII…TKKS), and 920–1015 (PSRP…APAP). Residues 699–729 (NTLGTGPPSEPSPKTTTREARPIVAPSDIGG) form a disordered region. Asn879 carries an N-linked (GlcNAc...) asparagine glycan. The tract at residues 907 to 926 (ASQRNRIYTKKSPPSRPPKI) is disordered. Residue Asn950 is glycosylated (N-linked (GlcNAc...) asparagine). Gly1010 is lipidated: GPI-anchor amidated glycine. Positions 1011–1032 (SAPAPALASALLLLPLLWTLML) are cleaved as a propeptide — removed in mature form.

Belongs to the immunoglobulin superfamily. Contactin family. As to expression, expressed in brain.

It localises to the cell membrane. Mediates cell surface interactions during nervous system development. The polypeptide is Contactin-1a (cntn1a) (Danio rerio (Zebrafish)).